The primary structure comprises 431 residues: Serine--tRNA ligase (431 aa).

Position 236 to 238 (236 to 238) interacts with L-serine; sequence TAE. Residue 267–269 participates in ATP binding; sequence RSE. Residue Glu290 participates in L-serine binding. ATP is bound at residue 354-357; sequence EISS. Residue Ser389 coordinates L-serine.

This sequence belongs to the class-II aminoacyl-tRNA synthetase family. Type-1 seryl-tRNA synthetase subfamily. In terms of assembly, homodimer. The tRNA molecule binds across the dimer.

Its subcellular location is the cytoplasm. The catalysed reaction is tRNA(Ser) + L-serine + ATP = L-seryl-tRNA(Ser) + AMP + diphosphate + H(+). The enzyme catalyses tRNA(Sec) + L-serine + ATP = L-seryl-tRNA(Sec) + AMP + diphosphate + H(+). It participates in aminoacyl-tRNA biosynthesis; selenocysteinyl-tRNA(Sec) biosynthesis; L-seryl-tRNA(Sec) from L-serine and tRNA(Sec): step 1/1. Its function is as follows. Catalyzes the attachment of serine to tRNA(Ser). Is also able to aminoacylate tRNA(Sec) with serine, to form the misacylated tRNA L-seryl-tRNA(Sec), which will be further converted into selenocysteinyl-tRNA(Sec). In Janthinobacterium sp. (strain Marseille) (Minibacterium massiliensis), this protein is Serine--tRNA ligase.